An 866-amino-acid chain; its full sequence is MTTFGAVAEWRLPSLRRATLWIPQWFAKKAIFNSPLEAAMAFPHLQQPSFLLASLKADSINKPFAQQCQDLVKVIEDFPAKELHTIFPWLVESIFGSLDGVLVGWNLRCLQGRVNPVEYSIVMEFLDPGGPMMKLVYKLQAEDYKFDFPVSYLPGPVKASIQECILPDSPLYHNKVQFTPTGGLGLNLALNPFEYYIFFFALSLITQKPLPVSLHVRTSDCAYFILVDRYLSWFLPTEGSVPPPLSSSPGGTSPSPPPRTPAIPFASYGLHHTSLLKRHISHQTSVNADPASHEIWRSETLLQVFVEMWLHHYSLEMYQKMQSPHAKLEVLHYRLSVSSALYSPAQPSLQALHAYQESFTPTEEHVLVVRLLLKHLHAFANSLKPEQASPSAHSHATSPLEEFKRAAVPRFVQQKLYLFLQHCFGHWPLDASFRAVLEMWLSYLQPWRYAPDKQAPGSDSQPRCVSEKWAPFVQENLLMYTKLFVGFLNRALRTDLVSPKHALMVFRVAKVFAQPNLAEMIQKGEQLFLEPELVIPHRQHRLFTAPTFTGSFLSPWPPAVTDASFKVKSHVYSLEGQDCKYTPMFGPEARTLVLRLAQLITQAKHTAKSISDQCAESPAGHSFLSWLGFSSMDTNGSYTANDLDEMGQDSVRKTDEYLEKALEYLRQIFRLSEAQLRQFTLALGTTQDENGKKQLPDCIVGEDGLILTPLGRYQIINGLRRFEIEYQGDPELQPIRSYEIASLVRTLFRLSSAINHRFAGQMAALCSRDDFLGSFCRYHLTEPGLASRHLLSPVGRRQVAGHTRGPRLSLRFLGSYRTLVSLLLAFFVASLFCVGPLPCTLLLTLGYVLYASAMTLLTERGKLHQP.

Residues S169 and S285 each carry the phosphoserine modification. T708 bears the Phosphothreonine mark. S792 bears the Phosphoserine mark. A helical transmembrane segment spans residues 822–842 (LLLAFFVASLFCVGPLPCTLL).

It depends on Mg(2+) as a cofactor. In terms of tissue distribution, widely expressed, with highest levels in heart and skeletal muscle. As to expression, expressed in skeletal muscle (at protein level). Expressed in skeletal muscle but a lower levels than isoform 1 (at protein level).

It localises to the endoplasmic reticulum membrane. The protein resides in the golgi apparatus membrane. Its subcellular location is the nucleus envelope. The protein localises to the cell membrane. It is found in the sarcolemma. It catalyses the reaction a sphingomyelin + H2O = phosphocholine + an N-acylsphing-4-enine + H(+). With respect to regulation, activated by phosphatidylserine and tumor necrosis factor (TNF). Inhibited by scyphostatin. Catalyzes the hydrolysis of membrane sphingomyelin to form phosphorylcholine and ceramide. It has a relevant role in the homeostasis of membrane sphingolipids, thereby influencing membrane integrity, and endoplasmic reticulum organization and function. May sensitize cells to DNA damage-induced apoptosis. In skeletal muscle, mediates TNF-stimulated oxidant production. The polypeptide is Sphingomyelin phosphodiesterase 4 (Homo sapiens (Human)).